A 1342-amino-acid polypeptide reads, in one-letter code: DNA-directed RNA polymerase subunit beta (1342 aa).

This sequence belongs to the RNA polymerase beta chain family. As to quaternary structure, the RNAP catalytic core consists of 2 alpha, 1 beta, 1 beta' and 1 omega subunit. When a sigma factor is associated with the core the holoenzyme is formed, which can initiate transcription.

It catalyses the reaction RNA(n) + a ribonucleoside 5'-triphosphate = RNA(n+1) + diphosphate. Functionally, DNA-dependent RNA polymerase catalyzes the transcription of DNA into RNA using the four ribonucleoside triphosphates as substrates. In Edwardsiella ictaluri (strain 93-146), this protein is DNA-directed RNA polymerase subunit beta.